Consider the following 977-residue polypeptide: MSAGPGCEPCTKRPRWDAAATSPPAASDARSFPGRQRRVLDSKDAPVQFRVPPSSSGCALGRAGQHRGSATSLVFKQKTITSWMDTKGIKTVESESLHSKENNNTREESMMSSVQKDNFYQHNMEKLENVSQLGFDKSPVEKGTQYLKQHQTAAMCKWQNEGPHSERLLESEPPAVTLVPEQFSNANVDQSSPKDDHSDTNSEESRDNQQFLTHVKLANAKQTMEDEQGREARSHQKCGKACHPAEACAGCQQEETDVVSESPLSDTGSEDVGTGLKNANRLNRQESSLGNSPPFEKESEPESPMDVDNSKNSCQDSEADEETSPGFDEQEDSSSAQTANKPSRFQPREADTELRKRSSAKGGEIRLHFQFEGGESRAGMNDVNAKRPGSTSSLNVECRNSKQHGRKDSKITDHFMRVPKAEDKRKEQCEMKHQRTERKIPKYIPPHLSPDKKWLGTPIEEMRRMPRCGIRLPPLRPSANHTVTIRVDLLRIGEVPKPFPTHFKDLWDNKHVKMPCSEQNLYPVEDENGERAAGSRWELIQTALLNRLTRPQNLKDAILKYNVAYSKKWDFTALIDFWDKVLEEAEAQHLYQSILPDMVKIALCLPNICTQPIPLLKQKMNHSITMSQEQIASLLANAFFCTFPRRNAKMKSEYSSYPDINFNRLFEGRSSRKPEKLKTLFCYFRRVTEKKPTGLVTFTRQSLEDFPEWERCEKLLTRLHVTYEGTIEGNGQGMLQVDFANRFVGGGVTSAGLVQEEIRFLINPELIVSRLFTEVLDHNECLIITGTEQYSEYTGYAETYRWARSHEDRSERDDWQRRTTEIVAIDALHFRRYLDQFVPEKIRRELNKAYCGFLRPGVSSENLSAVATGNWGCGAFGGDARLKALIQILAAAVAERDVVYFTFGDSELMRDIYSMHTFLTERKLTVGEVYKLLLRYYNEECRNCSTPGPDIKLYPFIYHAVESCTQTTNQPGQRTGA.

Residues M1–S69 form a disordered region. An A-domain region spans residues M1–T457. The short motif at C10 to W16 is the Nuclear localization signal element. Over residues D17–A29 the composition is skewed to low complexity. Residue S69 is modified to Phosphoserine. Positions Q77 to M84 match the PIP-box (PCNA interacting peptide) motif. A phosphoserine mark is found at S138 and S198. Residues S184–K407 are disordered. Basic and acidic residues-rich tracts occupy residues S192 to D207 and T223 to S234. Phosphothreonine is present on T200. 7 positions are modified to phosphoserine: S262, S265, S287, S292, S299, S303, and S317. Over residues N280–N291 the composition is skewed to polar residues. Positions S317–D332 are enriched in acidic residues. Polar residues predominate over residues S333 to S343. K341 is modified (N6-acetyllysine). Basic and acidic residues predominate over residues Q346–K356. S449 carries the phosphoserine modification. The segment at Q611–Y796 is catalytic. I727–E728 serves as a coordination point for substrate. Residue D738 is part of the active site. Positions 741 and 755 each coordinate substrate. Active-site residues include E756 and E757. Substrate-binding positions include Y796 and N870–A875.

The protein belongs to the poly(ADP-ribose) glycohydrolase family. In terms of assembly, interacts with PCNA. Interacts with NUDT5.

It localises to the nucleus. It catalyses the reaction [(1''-&gt;2')-ADP-alpha-D-ribose](n) + H2O = [(1''-&gt;2')-ADP-alpha-D-ribose](n-1) + ADP-D-ribose. Functionally, poly(ADP-ribose) glycohydrolase that degrades poly(ADP-ribose) by hydrolyzing the ribose-ribose bonds present in poly(ADP-ribose). PARG acts both as an endo- and exoglycosidase, releasing poly(ADP-ribose) of different length as well as ADP-ribose monomers. It is however unable to cleave the ester bond between the terminal ADP-ribose and ADP-ribosylated residues, leaving proteins that are mono-ADP-ribosylated. Poly(ADP-ribose) is synthesized after DNA damage is only present transiently and is rapidly degraded by PARG. Required to prevent detrimental accumulation of poly(ADP-ribose) upon prolonged replicative stress, while it is not required for recovery from transient replicative stress. Responsible for the prevalence of mono-ADP-ribosylated proteins in cells, thanks to its ability to degrade poly(ADP-ribose) without cleaving the terminal protein-ribose bond. Required for retinoid acid-dependent gene transactivation, probably by removing poly(ADP-ribose) from histone demethylase KDM4D, allowing chromatin derepression at RAR-dependent gene promoters. Involved in the synthesis of ATP in the nucleus, together with PARP1, NMNAT1 and NUDT5. Nuclear ATP generation is required for extensive chromatin remodeling events that are energy-consuming. The chain is Poly(ADP-ribose) glycohydrolase from Bos taurus (Bovine).